We begin with the raw amino-acid sequence, 205 residues long: MTTDYEYSLWPTLSLISGIDEAGRGPLAGPVVAAAVIFPRWFRPRHAGLDKLDDSKKLSPNLREQLAPTIKTFAAFWAVAVIEPDIIDRINIFQATMQAMNNAVASLHQPPELILVDGNRFMPNAPIPYETIVKGDAKVFSIAAASVLAKTHRDAIMTAYGKEYPEYGFERHFGYPTASHIKAIETFGRTPVHRKSFRLKQLGEK.

The RNase H type-2 domain occupies 14–205 (SLISGIDEAG…SFRLKQLGEK (192 aa)). 3 residues coordinate a divalent metal cation: Asp20, Glu21, and Asp117.

It belongs to the RNase HII family. Requires Mn(2+) as cofactor. Mg(2+) is required as a cofactor.

It is found in the cytoplasm. It carries out the reaction Endonucleolytic cleavage to 5'-phosphomonoester.. Endonuclease that specifically degrades the RNA of RNA-DNA hybrids. This is Ribonuclease HII from Chlorobium phaeobacteroides (strain DSM 266 / SMG 266 / 2430).